The primary structure comprises 120 residues: NAD(P)H-quinone oxidoreductase subunit 3, chloroplastic (120 aa).

The next 3 helical transmembrane spans lie at 9 to 29 (IFWA…LISG), 64 to 84 (MFAL…PWAM), and 88 to 108 (VLGL…IVGS).

It belongs to the complex I subunit 3 family. In terms of assembly, NDH is composed of at least 16 different subunits, 5 of which are encoded in the nucleus.

It is found in the plastid. Its subcellular location is the chloroplast thylakoid membrane. The enzyme catalyses a plastoquinone + NADH + (n+1) H(+)(in) = a plastoquinol + NAD(+) + n H(+)(out). It catalyses the reaction a plastoquinone + NADPH + (n+1) H(+)(in) = a plastoquinol + NADP(+) + n H(+)(out). Functionally, NDH shuttles electrons from NAD(P)H:plastoquinone, via FMN and iron-sulfur (Fe-S) centers, to quinones in the photosynthetic chain and possibly in a chloroplast respiratory chain. The immediate electron acceptor for the enzyme in this species is believed to be plastoquinone. Couples the redox reaction to proton translocation, and thus conserves the redox energy in a proton gradient. The sequence is that of NAD(P)H-quinone oxidoreductase subunit 3, chloroplastic from Manihot esculenta (Cassava).